A 403-amino-acid polypeptide reads, in one-letter code: Tyrosine--tRNA ligase (403 aa).

A 'HIGH' region motif is present at residues 45–54; that stretch reads PTAPDLHLGH. The 'KMSKS' region motif lies at 229 to 233; the sequence is KMSKS. Lys232 provides a ligand contact to ATP. Positions 341–402 constitute an S4 RNA-binding domain; that stretch reads VALCRLLAEA…GKRRFARITF (62 aa).

This sequence belongs to the class-I aminoacyl-tRNA synthetase family. TyrS type 2 subfamily. In terms of assembly, homodimer.

The protein resides in the cytoplasm. It catalyses the reaction tRNA(Tyr) + L-tyrosine + ATP = L-tyrosyl-tRNA(Tyr) + AMP + diphosphate + H(+). In terms of biological role, catalyzes the attachment of tyrosine to tRNA(Tyr) in a two-step reaction: tyrosine is first activated by ATP to form Tyr-AMP and then transferred to the acceptor end of tRNA(Tyr). The polypeptide is Tyrosine--tRNA ligase (Geobacter sulfurreducens (strain ATCC 51573 / DSM 12127 / PCA)).